The primary structure comprises 162 residues: Serine-protein kinase RsbW (162 aa).

This sequence belongs to the anti-sigma-factor family.

It carries out the reaction L-seryl-[protein] + ATP = O-phospho-L-seryl-[protein] + ADP + H(+). The catalysed reaction is L-threonyl-[protein] + ATP = O-phospho-L-threonyl-[protein] + ADP + H(+). Negative regulator of sigma-B activity. Phosphorylates and inactivates its specific antagonist protein, RsbV. Upon phosphorylation of RsbV, RsbW is released and binds to sigma-B, thereby blocking its ability to form an RNA polymerase holoenzyme (E-sigma-B). This Bacillus pumilus (strain SAFR-032) protein is Serine-protein kinase RsbW.